The chain runs to 487 residues: Probable cobyric acid synthase (487 aa).

The GATase cobBQ-type domain occupies 249–435; that stretch reads DVDIAVVRFP…LHGIFNNASF (187 aa). Catalysis depends on Cys328, which acts as the Nucleophile. His427 is a catalytic residue.

Belongs to the CobB/CobQ family. CobQ subfamily.

It functions in the pathway cofactor biosynthesis; adenosylcobalamin biosynthesis. Catalyzes amidations at positions B, D, E, and G on adenosylcobyrinic A,C-diamide. NH(2) groups are provided by glutamine, and one molecule of ATP is hydrogenolyzed for each amidation. The sequence is that of Probable cobyric acid synthase from Methanocella arvoryzae (strain DSM 22066 / NBRC 105507 / MRE50).